The chain runs to 279 residues: H-2 class II histocompatibility antigen gamma chain (279 aa).

The segment at 1-23 (MDDQRDLISNHEQLPILGNRPRE) is disordered. Over 1 to 29 (MDDQRDLISNHEQLPILGNRPREPERCSR) the chain is Cytoplasmic. Ser9 is modified (phosphoserine). The chain crosses the membrane as a helical; Signal-anchor for type II membrane protein span at residues 30-55 (GALYTGVSVLVALLLAGQATTAYFLY). At 56 to 279 (QQQGRLDKLT…TRQELGQVTL (224 aa)) the chain is on the extracellular side. 2 N-linked (GlcNAc...) asparagine glycosylation sites follow: Asn113 and Asn119. A Thyroglobulin type-1 domain is found at 193–254 (LTKCQEEVSH…HTKSRGRHNC (62 aa)). 3 disulfide bridges follow: Cys196–Cys215, Cys226–Cys233, and Cys235–Cys254. Ser265 carries an O-linked (Xyl...) (chondroitin sulfate) serine glycan.

Nonamer composed of three alpha/beta/gamma heterotrimers. Interacts with CD44; this complex is essential for the MIF-induced signaling cascade that results in B cell survival. As to quaternary structure, interacts with the mature form of CTSL; the complex survive in neutral pH environment. As to expression, expressed in thymus and lymph noodes. Expressed by antigen-presenting cells (APCs). Expressed in thymus and lymph noodes.

It is found in the late endosome. Its subcellular location is the lysosome. The protein localises to the cell membrane. It localises to the endoplasmic reticulum membrane. The protein resides in the golgi apparatus. It is found in the trans-Golgi network. Its subcellular location is the endosome. The protein localises to the secreted. Functionally, plays a critical role in MHC class II antigen processing by stabilizing peptide-free class II alpha/beta heterodimers in a complex soon after their synthesis and directing transport of the complex from the endoplasmic reticulum to compartments where peptide loading of class II takes place. Enhance also the stimulation of T-cell responses through interaction with CD44. Its function is as follows. Stabilizes the conformation of mature CTSL by binding to its active site and serving as a chaperone to help maintain a pool of mature enzyme in endocytic compartments and extracellular space of antigen-presenting cells (APCs). Binds to the peptide-binding site of MHC class II alpha/beta heterodimers forming an alpha-beta-CLIP complex, thereby preventing the loading of antigenic peptides to the MHC class II complex until its release by HLA-DM in the endosome. In Mus musculus (Mouse), this protein is H-2 class II histocompatibility antigen gamma chain.